The primary structure comprises 181 residues: ATP-dependent protease subunit HslV (181 aa).

Threonine 7 is a catalytic residue. 3 residues coordinate Na(+): alanine 162, cysteine 165, and threonine 168.

The protein belongs to the peptidase T1B family. HslV subfamily. As to quaternary structure, a double ring-shaped homohexamer of HslV is capped on each side by a ring-shaped HslU homohexamer. The assembly of the HslU/HslV complex is dependent on binding of ATP.

The protein resides in the cytoplasm. It carries out the reaction ATP-dependent cleavage of peptide bonds with broad specificity.. Its activity is regulated as follows. Allosterically activated by HslU binding. Protease subunit of a proteasome-like degradation complex believed to be a general protein degrading machinery. In Coxiella burnetii (strain RSA 331 / Henzerling II), this protein is ATP-dependent protease subunit HslV.